A 468-amino-acid chain; its full sequence is BTB and MATH domain-containing protein 45 (468 aa).

The 118-residue stretch at 7–124 (VFELSHVFKD…DDSIIIEVLV (118 aa)) folds into the MATH domain. BTB domains are found at residues 148–215 (SDGI…IDDD) and 304–368 (SDVI…IDDL).

The polypeptide is BTB and MATH domain-containing protein 45 (bath-45) (Caenorhabditis elegans).